Consider the following 383-residue polypeptide: Heme chaperone HemW (383 aa).

A Radical SAM core domain is found at 1-241; sequence MPKLPPLSLY…LTMAGYQQYE (241 aa). Residue Tyr10 participates in S-adenosyl-L-methionine binding. The [4Fe-4S] cluster site is built by Cys16, Cys20, and Cys23. S-adenosyl-L-methionine contacts are provided by residues Gly70, 71–72, Glu103, Gln130, Arg142, and Asp167; that span reads GT.

This sequence belongs to the anaerobic coproporphyrinogen-III oxidase family. HemW subfamily. The cofactor is [4Fe-4S] cluster.

The protein resides in the cytoplasm. In terms of biological role, probably acts as a heme chaperone, transferring heme to an unknown acceptor. Binds one molecule of heme per monomer, possibly covalently. Binds 1 [4Fe-4S] cluster. The cluster is coordinated with 3 cysteines and an exchangeable S-adenosyl-L-methionine. In Haemophilus influenzae (strain ATCC 51907 / DSM 11121 / KW20 / Rd), this protein is Heme chaperone HemW.